The chain runs to 162 residues: Serine-protein kinase RsbW (162 aa).

The protein belongs to the anti-sigma-factor family.

The catalysed reaction is L-seryl-[protein] + ATP = O-phospho-L-seryl-[protein] + ADP + H(+). It catalyses the reaction L-threonyl-[protein] + ATP = O-phospho-L-threonyl-[protein] + ADP + H(+). Negative regulator of sigma-B activity. Phosphorylates and inactivates its specific antagonist protein, RsbV. Upon phosphorylation of RsbV, RsbW is released and binds to sigma-B, thereby blocking its ability to form an RNA polymerase holoenzyme (E-sigma-B). In Halalkalibacterium halodurans (strain ATCC BAA-125 / DSM 18197 / FERM 7344 / JCM 9153 / C-125) (Bacillus halodurans), this protein is Serine-protein kinase RsbW.